A 201-amino-acid chain; its full sequence is MSYYFNYIGKKLKPRKSVTFSTETKVYEYPREPELTAQEKQKLLEEEEESDFSGFFVIDLTDSDNEIKEEEESEEEEKEISHGAKSTIKSILTNYRNKHGRNRNPRSRSIFKNAQRGYRRREITKIAKEEARVYWEGSDLLDSPDSELPTLPRFDFTPSEMESKRTGFGFTFDEHEEALHGILPGGCTGNTETVDQGLSKQ.

Residues 64–78 show a composition bias toward acidic residues; sequence DNEIKEEEESEEEEK. Disordered regions lie at residues 64 to 114 and 182 to 201; these read DNEI…FKNA and ILPG…LSKQ. Basic residues predominate over residues 96–106; sequence RNKHGRNRNPR. Over residues 189–201 the composition is skewed to polar residues; the sequence is GNTETVDQGLSKQ.

This is an uncharacterized protein from Ostreid herpesvirus 1 (isolate France) (OsHV-1).